Here is a 233-residue protein sequence, read N- to C-terminus: Large ribosomal subunit protein uL1 (233 aa).

This sequence belongs to the universal ribosomal protein uL1 family. As to quaternary structure, part of the 50S ribosomal subunit.

Binds directly to 23S rRNA. The L1 stalk is quite mobile in the ribosome, and is involved in E site tRNA release. Functionally, protein L1 is also a translational repressor protein, it controls the translation of the L11 operon by binding to its mRNA. The sequence is that of Large ribosomal subunit protein uL1 from Vibrio cholerae serotype O1 (strain ATCC 39315 / El Tor Inaba N16961).